The primary structure comprises 109 residues: MKNKRVIKKNFEFQEIINYKKTIKNFCFVIYYKDNEESYLKYGISVGKKIGNAVIRNKVKRQIRMILKQNISEIGTVSKDIIILVRKSVLELKYATLSKLLIKLIKEIK.

This sequence belongs to the RnpA family. Consists of a catalytic RNA component (M1 or rnpB) and a protein subunit.

The enzyme catalyses Endonucleolytic cleavage of RNA, removing 5'-extranucleotides from tRNA precursor.. In terms of biological role, RNaseP catalyzes the removal of the 5'-leader sequence from pre-tRNA to produce the mature 5'-terminus. It can also cleave other RNA substrates such as 4.5S RNA. The protein component plays an auxiliary but essential role in vivo by binding to the 5'-leader sequence and broadening the substrate specificity of the ribozyme. The chain is Ribonuclease P protein component from Mycoplasma capricolum subsp. capricolum (strain California kid / ATCC 27343 / NCTC 10154).